The following is a 239-amino-acid chain: Pyridoxine 5'-phosphate synthase (239 aa).

Asparagine 7 is a 3-amino-2-oxopropyl phosphate binding site. 9–10 (DH) contacts 1-deoxy-D-xylulose 5-phosphate. A 3-amino-2-oxopropyl phosphate-binding site is contributed by arginine 18. The active-site Proton acceptor is histidine 43. Residues arginine 45 and histidine 50 each contribute to the 1-deoxy-D-xylulose 5-phosphate site. Glutamate 70 serves as the catalytic Proton acceptor. A 1-deoxy-D-xylulose 5-phosphate-binding site is contributed by threonine 100. The Proton donor role is filled by histidine 191. 3-amino-2-oxopropyl phosphate contacts are provided by residues glycine 192 and 213–214 (GH).

This sequence belongs to the PNP synthase family. As to quaternary structure, homooctamer; tetramer of dimers.

The protein localises to the cytoplasm. It catalyses the reaction 3-amino-2-oxopropyl phosphate + 1-deoxy-D-xylulose 5-phosphate = pyridoxine 5'-phosphate + phosphate + 2 H2O + H(+). It functions in the pathway cofactor biosynthesis; pyridoxine 5'-phosphate biosynthesis; pyridoxine 5'-phosphate from D-erythrose 4-phosphate: step 5/5. Catalyzes the complicated ring closure reaction between the two acyclic compounds 1-deoxy-D-xylulose-5-phosphate (DXP) and 3-amino-2-oxopropyl phosphate (1-amino-acetone-3-phosphate or AAP) to form pyridoxine 5'-phosphate (PNP) and inorganic phosphate. This is Pyridoxine 5'-phosphate synthase from Trichlorobacter lovleyi (strain ATCC BAA-1151 / DSM 17278 / SZ) (Geobacter lovleyi).